The sequence spans 399 residues: Acetate kinase (399 aa).

Mg(2+) is bound at residue Asn9. Lys16 contacts ATP. Residue Arg90 coordinates substrate. Asp147 (proton donor/acceptor) is an active-site residue. ATP is bound by residues 207-211 (HLGNG), 281-283 (DFR), and 333-337 (GVGEN). Position 387 (Glu387) interacts with Mg(2+).

Belongs to the acetokinase family. As to quaternary structure, homodimer. Requires Mg(2+) as cofactor. Mn(2+) serves as cofactor.

The protein resides in the cytoplasm. It carries out the reaction acetate + ATP = acetyl phosphate + ADP. It participates in metabolic intermediate biosynthesis; acetyl-CoA biosynthesis; acetyl-CoA from acetate: step 1/2. Its function is as follows. Catalyzes the formation of acetyl phosphate from acetate and ATP. Can also catalyze the reverse reaction. This is Acetate kinase from Mycobacterium sp. (strain KMS).